Reading from the N-terminus, the 235-residue chain is Mitochondrial inner membrane protease ATP23 homolog (235 aa).

Histidine 114 provides a ligand contact to a divalent metal cation. Glutamate 115 is a catalytic residue. Histidine 118 provides a ligand contact to a divalent metal cation.

Belongs to the peptidase M76 family.

The sequence is that of Mitochondrial inner membrane protease ATP23 homolog (atp23) from Xenopus laevis (African clawed frog).